The chain runs to 92 residues: Phospholemman (92 aa).

The signal sequence occupies residues 1-20; that stretch reads MAYLHHTLLVCMGLLAMANA. The Extracellular segment spans residues 22–35; it reads APQEQDPFTYDYQS. A helical transmembrane segment spans residues 36–56; it reads LRIGGLIIAGILFILGILIIL. Residues 57–92 lie on the Cytoplasmic side of the membrane; sequence KRGAWERFDTARRTGEPDEEEGTFRSSIRRLSTRRR. The interval 67 to 92 is disordered; sequence ARRTGEPDEEEGTFRSSIRRLSTRRR. Thr79 carries the phosphothreonine modification. Ser82 carries the phosphoserine modification. Ser83 carries the post-translational modification Phosphoserine; by PKA and PKC. Basic residues predominate over residues 83-92; sequence SIRRLSTRRR. A Phosphoserine; by PKA modification is found at Ser88. Thr89 is modified (phosphothreonine; by PKC).

It belongs to the FXYD family. Homotetramer. Monomer. Regulatory subunit of the sodium/potassium-transporting ATPase (NKA) which is composed of a catalytic alpha subunit, a non-catalytic beta subunit and an additional regulatory subunit. The monomeric form associates with NKA while the oligomeric form does not. Interacts with the catalytic alpha-1 subunit ATP1A1. Also interacts with the catalytic alpha-2 and alpha-3 subunits ATP1A2 and ATP1A3. Very little interaction with ATP1A1, ATP1A2 or ATP1A3 when phosphorylated at Ser-83. Interacts with the non-catalytic beta-1 subunit ATP1B1. Oxidative stress decreases interaction with ATP1A1 but increases interaction with ATP1B1. In terms of processing, major plasma membrane substrate for cAMP-dependent protein kinase (PKA) and protein kinase C (PKC) in several different tissues. Phosphorylated in response to insulin and adrenergic stimulation. Phosphorylation at Ser-88 stimulates sodium/potassium-transporting ATPase activity while the unphosphorylated form inhibits sodium/potassium-transporting ATPase activity. Phosphorylation increases tetramerization, decreases binding to ATP1A1 and reduces inhibition of ATP1A1 activity. Phosphorylation at Ser-83 leads to greatly reduced interaction with ATP1A1, ATP1A2 and ATP1A3. May be phosphorylated by DMPK. Post-translationally, palmitoylation increases half-life and stability and is enhanced upon phosphorylation at Ser-88 by PKA. Glutathionylated. Expressed in ventricular myocytes (at protein level).

It is found in the cell membrane. Its subcellular location is the sarcolemma. It localises to the apical cell membrane. The protein localises to the membrane. The protein resides in the caveola. It is found in the T-tubule. Associates with and regulates the activity of the sodium/potassium-transporting ATPase (NKA) which transports Na(+) out of the cell and K(+) into the cell. Inhibits NKA activity in its unphosphorylated state and stimulates activity when phosphorylated. Reduces glutathionylation of the NKA beta-1 subunit ATP1B1, thus reversing glutathionylation-mediated inhibition of ATP1B1. Contributes to female sexual development by maintaining the excitability of neurons which secrete gonadotropin-releasing hormone. This Oryctolagus cuniculus (Rabbit) protein is Phospholemman.